Consider the following 354-residue polypeptide: Carbamoyl phosphate synthase small chain (354 aa).

Residues 1–167 (MEAVLILEDG…KEPKIHKTAN (167 aa)) are CPSase. The L-glutamine site is built by serine 45, glycine 219, and glycine 221. A Glutamine amidotransferase type-1 domain is found at 171 to 354 (RCVLIDCGVK…DEMIKLKDRK (184 aa)). Cysteine 246 serves as the catalytic Nucleophile. L-glutamine contacts are provided by leucine 247, glutamine 250, asparagine 288, glycine 290, and phenylalanine 291. Residues histidine 330 and glutamate 332 contribute to the active site.

The protein belongs to the CarA family. As to quaternary structure, composed of two chains; the small (or glutamine) chain promotes the hydrolysis of glutamine to ammonia, which is used by the large (or ammonia) chain to synthesize carbamoyl phosphate. Tetramer of heterodimers (alpha,beta)4.

It carries out the reaction hydrogencarbonate + L-glutamine + 2 ATP + H2O = carbamoyl phosphate + L-glutamate + 2 ADP + phosphate + 2 H(+). The catalysed reaction is L-glutamine + H2O = L-glutamate + NH4(+). It functions in the pathway amino-acid biosynthesis; L-arginine biosynthesis; carbamoyl phosphate from bicarbonate: step 1/1. Its pathway is pyrimidine metabolism; UMP biosynthesis via de novo pathway; (S)-dihydroorotate from bicarbonate: step 1/3. Small subunit of the glutamine-dependent carbamoyl phosphate synthetase (CPSase). CPSase catalyzes the formation of carbamoyl phosphate from the ammonia moiety of glutamine, carbonate, and phosphate donated by ATP, constituting the first step of 2 biosynthetic pathways, one leading to arginine and/or urea and the other to pyrimidine nucleotides. The small subunit (glutamine amidotransferase) binds and cleaves glutamine to supply the large subunit with the substrate ammonia. The sequence is that of Carbamoyl phosphate synthase small chain from Methanocaldococcus jannaschii (strain ATCC 43067 / DSM 2661 / JAL-1 / JCM 10045 / NBRC 100440) (Methanococcus jannaschii).